Consider the following 37-residue polypeptide: Disintegrin morulustatin (37 aa).

Cystine bridges form between cysteine 12–cysteine 16, cysteine 22–cysteine 36, and cysteine 24–cysteine 31.

Belongs to the venom metalloproteinase (M12B) family. P-II subfamily. P-IIa sub-subfamily. Expressed by the venom gland.

Its subcellular location is the secreted. Functionally, inhibits ADP-induced platelet aggregation in human whole blood in a concentration-dependent manner (IC(50)=89.5 nM). The sequence is that of Disintegrin morulustatin from Crotalus morulus (Tamaulipan rock rattlesnake).